Consider the following 203-residue polypeptide: MSTNSRAGDAYAYALLKVLFNETKDFDSFSDLVGDVLDFVTIFNTCPSIEEFFANPTYSPIQKKQFLYDFFGRSLNPILMSFLYLLCDTKRIIYISSIISIFLETLLKNTNSHIVEVQTPTGKDYKLDISKLETTLSGWFNKIQKNNDEAVNFLNFDESLVIFTVKEVPGLLGGFRLNFVTDSKVIDFSIAGKIKRLAAVLNY.

The protein belongs to the ATPase delta chain family. As to quaternary structure, F-type ATPases have 2 components, F(1) - the catalytic core - and F(0) - the membrane proton channel. F(1) has five subunits: alpha(3), beta(3), gamma(1), delta(1), epsilon(1). CF(0) has four main subunits: a(1), b(1), b'(1) and c(10-14). The alpha and beta chains form an alternating ring which encloses part of the gamma chain. F(1) is attached to F(0) by a central stalk formed by the gamma and epsilon chains, while a peripheral stalk is formed by the delta, b and b' chains.

The protein resides in the plastid. The protein localises to the chloroplast thylakoid membrane. In terms of biological role, f(1)F(0) ATP synthase produces ATP from ADP in the presence of a proton or sodium gradient. F-type ATPases consist of two structural domains, F(1) containing the extramembraneous catalytic core and F(0) containing the membrane proton channel, linked together by a central stalk and a peripheral stalk. During catalysis, ATP synthesis in the catalytic domain of F(1) is coupled via a rotary mechanism of the central stalk subunits to proton translocation. Its function is as follows. This protein is part of the stalk that links CF(0) to CF(1). It either transmits conformational changes from CF(0) to CF(1) or is implicated in proton conduction. The chain is ATP synthase subunit delta, chloroplastic from Heterosigma akashiwo (strain NIES-293 / 8280G21-1).